The following is a 406-amino-acid chain: Inactive serine protease 35 (406 aa).

An N-terminal signal peptide occupies residues 1 to 17; that stretch reads MLLWLIIFVSGWTLSLG. Asn-87 carries N-linked (GlcNAc...) asparagine glycosylation. The Peptidase S1 domain maps to 121 to 401; sequence VYGTDSRFSI…ICLWIHGNAA (281 aa). Residues Cys-151 and Cys-167 are joined by a disulfide bond. A compositionally biased stretch (basic residues) spans 186-204; it reads LKMRNKGGRKKRRGSRRSR. Residues 186–248 are disordered; sequence LKMRNKGGRK…RPSFQWTRVK (63 aa).

It belongs to the peptidase S1 family.

Its subcellular location is the secreted. The sequence is that of Inactive serine protease 35 (Prss35) from Rattus norvegicus (Rat).